Here is a 342-residue protein sequence, read N- to C-terminus: Holliday junction branch migration complex subunit RuvB (342 aa).

Positions 1–179 (MTSILSPEKS…FGIPMRLNFY (179 aa)) are large ATPase domain (RuvB-L). ATP is bound by residues leucine 18, arginine 19, glycine 60, lysine 63, threonine 64, threonine 65, 126–128 (EDF), arginine 169, tyrosine 179, and arginine 216. A Mg(2+)-binding site is contributed by threonine 64. The tract at residues 180–250 (NTEELKKVLN…IANFGLNRLE (71 aa)) is small ATPAse domain (RuvB-S). Residues 253 to 342 (IIGLDSNDYR…HQFNIFNDNE (90 aa)) form a head domain (RuvB-H) region. Arginine 289, arginine 308, and arginine 313 together coordinate DNA.

It belongs to the RuvB family. In terms of assembly, homohexamer. Forms an RuvA(8)-RuvB(12)-Holliday junction (HJ) complex. HJ DNA is sandwiched between 2 RuvA tetramers; dsDNA enters through RuvA and exits via RuvB. An RuvB hexamer assembles on each DNA strand where it exits the tetramer. Each RuvB hexamer is contacted by two RuvA subunits (via domain III) on 2 adjacent RuvB subunits; this complex drives branch migration. In the full resolvosome a probable DNA-RuvA(4)-RuvB(12)-RuvC(2) complex forms which resolves the HJ.

The protein localises to the cytoplasm. It catalyses the reaction ATP + H2O = ADP + phosphate + H(+). Its function is as follows. The RuvA-RuvB-RuvC complex processes Holliday junction (HJ) DNA during genetic recombination and DNA repair, while the RuvA-RuvB complex plays an important role in the rescue of blocked DNA replication forks via replication fork reversal (RFR). RuvA specifically binds to HJ cruciform DNA, conferring on it an open structure. The RuvB hexamer acts as an ATP-dependent pump, pulling dsDNA into and through the RuvAB complex. RuvB forms 2 homohexamers on either side of HJ DNA bound by 1 or 2 RuvA tetramers; 4 subunits per hexamer contact DNA at a time. Coordinated motions by a converter formed by DNA-disengaged RuvB subunits stimulates ATP hydrolysis and nucleotide exchange. Immobilization of the converter enables RuvB to convert the ATP-contained energy into a lever motion, pulling 2 nucleotides of DNA out of the RuvA tetramer per ATP hydrolyzed, thus driving DNA branch migration. The RuvB motors rotate together with the DNA substrate, which together with the progressing nucleotide cycle form the mechanistic basis for DNA recombination by continuous HJ branch migration. Branch migration allows RuvC to scan DNA until it finds its consensus sequence, where it cleaves and resolves cruciform DNA. In Rickettsia bellii (strain RML369-C), this protein is Holliday junction branch migration complex subunit RuvB.